Here is a 121-residue protein sequence, read N- to C-terminus: MKHRVGRVEGEILRELTKILRKDIRDPRLSEVTITAVECTNDLSYATIYYSLLTEDAEKEKEVQEGLDKAKGMMRHLLGQTLTVYKVPELIFKRDNSVKYGSKIDRLIAEVKKQDAERASK.

This sequence belongs to the RbfA family. As to quaternary structure, monomer. Binds 30S ribosomal subunits, but not 50S ribosomal subunits or 70S ribosomes.

The protein localises to the cytoplasm. One of several proteins that assist in the late maturation steps of the functional core of the 30S ribosomal subunit. Associates with free 30S ribosomal subunits (but not with 30S subunits that are part of 70S ribosomes or polysomes). Required for efficient processing of 16S rRNA. May interact with the 5'-terminal helix region of 16S rRNA. The chain is Ribosome-binding factor A from Lactobacillus acidophilus (strain ATCC 700396 / NCK56 / N2 / NCFM).